The chain runs to 428 residues: MQDSLTLQPIALVDGTVNLPGSKSVSNRALLLAALAEGTTRLTNLLDSDDVRHMLDALKAIGVKYSLSADRTCCEIVGQGGPLNAKEPLELFLGNAGTAMRPLAAALCIGNGDVVLTGEPRMKERPIGHLVDALRQGGAEVEYLEQENYPPLRVKGGFSGGEVTVNGSVSSQFLTALLMAAPLAPNDTRIVIKGDLVSKPYIDITLKLMATFGVVVENNDYDTFHISGQQQYQATREYLVEGDASSASYFLAAAAIKGGTVKVTGIGRNSMQGDIHFADVLEKMGASVEWGDDYIACTRGDLNAVDLDMNHIPDAAMTIATTALFAQGTTVMRNIYNWRVKETDRLTAMATELRKVGAEVEEGHDFISITPPAKIVFAEIGTYNDHRMAMCFSLVALSSSPVTILDPKCTAKTFPDYFEQLARLSHLA.

Residues Lys23, Ser24, and Arg28 each coordinate 3-phosphoshikimate. Residue Lys23 coordinates phosphoenolpyruvate. Phosphoenolpyruvate is bound by residues Gly97 and Arg125. 7 residues coordinate 3-phosphoshikimate: Ser170, Ser171, Gln172, Ser198, Asp314, Asn337, and Lys341. Gln172 is a phosphoenolpyruvate binding site. Asp314 functions as the Proton acceptor in the catalytic mechanism. Phosphoenolpyruvate is bound by residues Arg345, Arg387, and Lys412.

Belongs to the EPSP synthase family. In terms of assembly, monomer.

The protein localises to the cytoplasm. The enzyme catalyses 3-phosphoshikimate + phosphoenolpyruvate = 5-O-(1-carboxyvinyl)-3-phosphoshikimate + phosphate. The protein operates within metabolic intermediate biosynthesis; chorismate biosynthesis; chorismate from D-erythrose 4-phosphate and phosphoenolpyruvate: step 6/7. Its function is as follows. Catalyzes the transfer of the enolpyruvyl moiety of phosphoenolpyruvate (PEP) to the 5-hydroxyl of shikimate-3-phosphate (S3P) to produce enolpyruvyl shikimate-3-phosphate and inorganic phosphate. The chain is 3-phosphoshikimate 1-carboxyvinyltransferase from Erwinia tasmaniensis (strain DSM 17950 / CFBP 7177 / CIP 109463 / NCPPB 4357 / Et1/99).